The sequence spans 38 residues: Large ribosomal subunit protein bL36 (38 aa).

It belongs to the bacterial ribosomal protein bL36 family.

The chain is Large ribosomal subunit protein bL36 from Fervidobacterium nodosum (strain ATCC 35602 / DSM 5306 / Rt17-B1).